The sequence spans 160 residues: Large ribosomal subunit protein eL21 (160 aa).

Basic and acidic residues-rich tracts occupy residues 112-123 (NDQKKKEAKEKG) and 136-146 (REAHFVRTNGK). The segment at 112–146 (NDQKKKEAKEKGTWVQLNGQPAPPREAHFVRTNGK) is disordered.

The protein belongs to the eukaryotic ribosomal protein eL21 family. In terms of assembly, component of the large ribosomal subunit.

It is found in the cytoplasm. Its subcellular location is the cytosol. The protein localises to the endoplasmic reticulum. Functionally, component of the large ribosomal subunit. The ribosome is a large ribonucleoprotein complex responsible for the synthesis of proteins in the cell. The chain is Large ribosomal subunit protein eL21 (Rpl21) from Rattus norvegicus (Rat).